Reading from the N-terminus, the 208-residue chain is Uracil phosphoribosyltransferase (208 aa).

Residues R77, R102, and 129 to 137 (DPMLATGNS) each bind 5-phospho-alpha-D-ribose 1-diphosphate. Uracil is bound by residues I193 and 198–200 (GDA). Residue D199 participates in 5-phospho-alpha-D-ribose 1-diphosphate binding.

This sequence belongs to the UPRTase family. It depends on Mg(2+) as a cofactor.

The enzyme catalyses UMP + diphosphate = 5-phospho-alpha-D-ribose 1-diphosphate + uracil. Its pathway is pyrimidine metabolism; UMP biosynthesis via salvage pathway; UMP from uracil: step 1/1. Its activity is regulated as follows. Allosterically activated by GTP. Functionally, catalyzes the conversion of uracil and 5-phospho-alpha-D-ribose 1-diphosphate (PRPP) to UMP and diphosphate. The protein is Uracil phosphoribosyltransferase of Mycoplasmopsis pulmonis (strain UAB CTIP) (Mycoplasma pulmonis).